The following is a 429-amino-acid chain: Light-independent protochlorophyllide reductase subunit N (429 aa).

Residues Cys32, Cys57, and Cys118 each contribute to the [4Fe-4S] cluster site.

The protein belongs to the BchN/ChlN family. As to quaternary structure, protochlorophyllide reductase is composed of three subunits; BchL, BchN and BchB. Forms a heterotetramer of two BchB and two BchN subunits. Requires [4Fe-4S] cluster as cofactor.

The enzyme catalyses chlorophyllide a + oxidized 2[4Fe-4S]-[ferredoxin] + 2 ADP + 2 phosphate = protochlorophyllide a + reduced 2[4Fe-4S]-[ferredoxin] + 2 ATP + 2 H2O. It functions in the pathway porphyrin-containing compound metabolism; bacteriochlorophyll biosynthesis (light-independent). Component of the dark-operative protochlorophyllide reductase (DPOR) that uses Mg-ATP and reduced ferredoxin to reduce ring D of protochlorophyllide (Pchlide) to form chlorophyllide a (Chlide). This reaction is light-independent. The NB-protein (BchN-BchB) is the catalytic component of the complex. The sequence is that of Light-independent protochlorophyllide reductase subunit N from Rhodopseudomonas palustris (strain TIE-1).